Reading from the N-terminus, the 230-residue chain is PKHD-type hydroxylase Xfasm12_1709 (230 aa).

A Fe2OG dioxygenase domain is found at arginine 78–serine 182. 3 residues coordinate Fe cation: histidine 96, aspartate 98, and histidine 163. Arginine 173 is a binding site for 2-oxoglutarate.

The cofactor is Fe(2+). L-ascorbate serves as cofactor.

The chain is PKHD-type hydroxylase Xfasm12_1709 from Xylella fastidiosa (strain M12).